We begin with the raw amino-acid sequence, 89 residues long: Small ribosomal subunit protein uS15 (89 aa).

The protein belongs to the universal ribosomal protein uS15 family. In terms of assembly, part of the 30S ribosomal subunit. Forms a bridge to the 50S subunit in the 70S ribosome, contacting the 23S rRNA.

One of the primary rRNA binding proteins, it binds directly to 16S rRNA where it helps nucleate assembly of the platform of the 30S subunit by binding and bridging several RNA helices of the 16S rRNA. Its function is as follows. Forms an intersubunit bridge (bridge B4) with the 23S rRNA of the 50S subunit in the ribosome. In Shewanella sp. (strain ANA-3), this protein is Small ribosomal subunit protein uS15.